Consider the following 362-residue polypeptide: NAD(P)H-quinone oxidoreductase subunit 1, chloroplastic (362 aa).

Helical transmembrane passes span 29–49, 103–123, 128–148, 164–184, 202–222, 247–267, 303–323, and 335–355; these read ILPILTLLLGITIEVLVIVWL, IAVISVLLSFLVIPLGYHFVL, IGVFLWIAISSIAPIGLLMAG, AAQSISYEIPLTFCVLAISLL, FFGWNIWRQPIGFLVFLISSL, YSGIKYGLFYLVSYLNLLVSS, TMGIFITLTKAYLFLFISITI, and LLNLGWKFLLPISLGNLLLTT.

It belongs to the complex I subunit 1 family. As to quaternary structure, NDH is composed of at least 16 different subunits, 5 of which are encoded in the nucleus.

Its subcellular location is the plastid. It localises to the chloroplast thylakoid membrane. The enzyme catalyses a plastoquinone + NADH + (n+1) H(+)(in) = a plastoquinol + NAD(+) + n H(+)(out). It carries out the reaction a plastoquinone + NADPH + (n+1) H(+)(in) = a plastoquinol + NADP(+) + n H(+)(out). In terms of biological role, NDH shuttles electrons from NAD(P)H:plastoquinone, via FMN and iron-sulfur (Fe-S) centers, to quinones in the photosynthetic chain and possibly in a chloroplast respiratory chain. The immediate electron acceptor for the enzyme in this species is believed to be plastoquinone. Couples the redox reaction to proton translocation, and thus conserves the redox energy in a proton gradient. The chain is NAD(P)H-quinone oxidoreductase subunit 1, chloroplastic from Triticum aestivum (Wheat).